Here is a 1338-residue protein sequence, read N- to C-terminus: Aldehyde oxidase 1 (1338 aa).

The 2Fe-2S ferredoxin-type domain maps to 5–92 (SELLFYVNGR…GTAVTTVEGI (88 aa)). Gln-113 and Cys-151 together coordinate Mo-molybdopterin. One can recognise an FAD-binding PCMH-type domain in the interval 236 to 421 (FGSERMMWFS…VSVNIPYSRK (186 aa)). FAD contacts are provided by residues 264–271 (VIMGNTSV), Ala-345, Ser-354, His-358, Asp-367, and Leu-411. Residues 806 to 807 (AF) and Met-1047 contribute to the Mo-molybdopterin site. Ser-1068 is subject to Phosphoserine. Residues 1088-1091 (GSVV), Gln-1203, and Leu-1268 contribute to the Mo-molybdopterin site. Residue Glu-1270 is the Proton acceptor; for azaheterocycle hydroxylase activity of the active site.

Belongs to the xanthine dehydrogenase family. In terms of assembly, homodimer. It depends on [2Fe-2S] cluster as a cofactor. The cofactor is FAD. Mo-molybdopterin is required as a cofactor. As to expression, detected at high levels in liver, also detected in lung, kidney, lacrimal gland and olfactory mucosa.

The protein resides in the cytoplasm. It carries out the reaction an aldehyde + O2 + H2O = a carboxylate + H2O2 + H(+). The catalysed reaction is retinal + O2 + H2O = retinoate + H2O2 + H(+). Oxidase with broad substrate specificity, oxidizing aromatic azaheterocycles, such as N1-methylnicotinamide, N-methylphthalazinium and phthalazine, as well as aldehydes, such as benzaldehyde, retinal, pyridoxal, and vanillin. Plays a key role in the metabolism of xenobiotics and drugs containing aromatic azaheterocyclic substituents. Participates in the bioactivation of prodrugs such as famciclovir, catalyzing the oxidation step from 6-deoxypenciclovir to penciclovir, which is a potent antiviral agent. Is probably involved in the regulation of reactive oxygen species homeostasis. May be a prominent source of superoxide generation via the one-electron reduction of molecular oxygen. May also catalyze nitric oxide (NO) production via the reduction of nitrite to NO with NADH or aldehyde as electron donor. May play a role in adipogenesis. In Macaca fascicularis (Crab-eating macaque), this protein is Aldehyde oxidase 1 (AOX1).